Consider the following 330-residue polypeptide: 2-methoxy-6-polyprenyl-1,4-benzoquinol methylase, mitochondrial (330 aa).

A mitochondrion-targeting transit peptide spans 1–42 (MAAPRSWALWSFCGCGWSRAVSGCRLPGLRSSSPRGPLGARL). Residues threonine 117, aspartate 171, and 199-200 (DA) each bind S-adenosyl-L-methionine.

It belongs to the class I-like SAM-binding methyltransferase superfamily. MenG/UbiE family. As to quaternary structure, component of a multi-subunit COQ enzyme complex, composed of at least COQ3, COQ4, COQ5, COQ6, COQ7 and COQ9. Interacts with PYURF; the interaction is direct, stabilizes COQ5 protein and associates PYURF with COQ enzyme complex.

Its subcellular location is the mitochondrion inner membrane. It carries out the reaction 2-methoxy-6-(all-trans-decaprenyl)benzene-1,4-diol + S-adenosyl-L-methionine = 5-methoxy-2-methyl-3-(all-trans-decaprenyl)benzene-1,4-diol + S-adenosyl-L-homocysteine + H(+). It participates in cofactor biosynthesis; ubiquinone biosynthesis. Its function is as follows. Methyltransferase required for the conversion of 2-decaprenyl-6-methoxy-1,4-benzoquinol (DDMQH2) to 2-decaprenyl-3-methyl-6-methoxy-1,4-benzoquinol (DMQH2). The sequence is that of 2-methoxy-6-polyprenyl-1,4-benzoquinol methylase, mitochondrial from Bos taurus (Bovine).